The sequence spans 284 residues: D-tagatose-1,6-bisphosphate aldolase subunit GatY (284 aa).

Residue D82 is the Proton donor of the active site. Zn(2+) is bound by residues H83 and H180. G181 is a binding site for dihydroxyacetone phosphate. Zn(2+) is bound at residue H208. Dihydroxyacetone phosphate contacts are provided by residues 209–211 (GAS) and 230–233 (NVAT).

The protein belongs to the class II fructose-bisphosphate aldolase family. TagBP aldolase GatY subfamily. Forms a complex with GatZ. Requires Zn(2+) as cofactor.

It carries out the reaction D-tagatofuranose 1,6-bisphosphate = D-glyceraldehyde 3-phosphate + dihydroxyacetone phosphate. It participates in carbohydrate metabolism; D-tagatose 6-phosphate degradation; D-glyceraldehyde 3-phosphate and glycerone phosphate from D-tagatose 6-phosphate: step 2/2. Its function is as follows. Catalytic subunit of the tagatose-1,6-bisphosphate aldolase GatYZ, which catalyzes the reversible aldol condensation of dihydroxyacetone phosphate (DHAP or glycerone-phosphate) with glyceraldehyde 3-phosphate (G3P) to produce tagatose 1,6-bisphosphate (TBP). Requires GatZ subunit for full activity and stability. Is involved in the catabolism of galactitol. In Escherichia coli O6:K15:H31 (strain 536 / UPEC), this protein is D-tagatose-1,6-bisphosphate aldolase subunit GatY.